The sequence spans 193 residues: Adenylate kinase (193 aa).

Residue 10-18 (GVPGVGGTT) participates in ATP binding.

This sequence belongs to the archaeal adenylate kinase family. As to quaternary structure, monomer.

It localises to the cytoplasm. It carries out the reaction AMP + ATP = 2 ADP. The chain is Adenylate kinase from Methanococcus aeolicus (strain ATCC BAA-1280 / DSM 17508 / OCM 812 / Nankai-3).